A 754-amino-acid polypeptide reads, in one-letter code: Putative sulfate transporter YPR003C (754 aa).

Residues 1–91 (MTSNNSLLGR…NTSNTNNNDS (91 aa)) form a disordered region. At 1–118 (MTSNNSLLGR…SWLPEYTFNK (118 aa)) the chain is on the cytoplasmic side. Positions 25 to 45 (RSVDQRDTFSDNFDYDKDSSN) are enriched in basic and acidic residues. Positions 65-89 (NSRSGCTNNTNNTNNTSNTSNTNNN) are enriched in low complexity. A helical transmembrane segment spans residues 119-139 (LWGDVIAGISVASFQIPLALS). The Lumenal portion of the chain corresponds to 140-146 (YTTSIAH). A helical membrane pass occupies residues 147-167 (VPPLCGLYSLAISPFVYGILG). The Cytoplasmic segment spans residues 168 to 172 (SVPQM). Residues 173 to 193 (IVGPESAISLVVGQAVESITL) form a helical membrane-spanning segment. Over 194-199 (HKENVS) the chain is Lumenal. The chain crosses the membrane as a helical span at residues 200 to 220 (LIDISTVITFVSGTILLFSGI). Over 221–232 (SRFGFLGNVLSK) the chain is Cytoplasmic. A helical membrane pass occupies residues 233–253 (ALLRGFISSVGLVMIINSLIS). At 254–282 (ELKLDKFLVSLPQHYHTPFEKILFLIDYA) the chain is on the lumenal side. A helical membrane pass occupies residues 283–303 (PAQYHIPTAIFSGCCLIVLFL). The Cytoplasmic portion of the chain corresponds to 304–317 (TRLLKRKLMKYHKS). A helical transmembrane segment spans residues 318 to 338 (AIFFPDILLVVIVTILISMKF). The Lumenal segment spans residues 339-370 (NLKHRYGISIIGDFSMDNFDELKNPLTRPRRK). Residues 371–391 (LIPDLFSASLIVAMLGFFEST) form a helical membrane-spanning segment. Over 392 to 410 (TASKSLGTTYNLTVSSNRE) the chain is Cytoplasmic. A helical membrane pass occupies residues 411–431 (LVALGFMNIVISLFGALPAFG). Residues 432-450 (GYGRSKINALSGAQSVMSG) are Lumenal-facing. The helical transmembrane segment at 451–471 (VFMGVITLITMNLLLQFVHYI) threads the bilayer. The Cytoplasmic portion of the chain corresponds to 472-474 (PNC). A helical membrane pass occupies residues 475–495 (VLSVITTIIGISLLEEVPGDI). At 496–517 (KFHLRCGGFSELFVFAVTFCTT) the chain is on the lumenal side. A helical transmembrane segment spans residues 518–538 (IFYSIEAGICIGCVYSIINII). The Cytoplasmic portion of the chain corresponds to 539-754 (KHSAKSRIQI…SNTLFNSSLV (216 aa)). In terms of domain architecture, STAS spans 574–725 (DVEGTEEIEG…DSIDAALYEI (152 aa)).

It belongs to the SLC26A/SulP transporter (TC 2.A.53) family.

It localises to the endoplasmic reticulum membrane. Its function is as follows. Possible sulfate transporter. This Saccharomyces cerevisiae (strain ATCC 204508 / S288c) (Baker's yeast) protein is Putative sulfate transporter YPR003C.